The chain runs to 275 residues: Large ribosomal subunit protein uL2 (275 aa).

Disordered stretches follow at residues 38-59 (KKHA…GGHK) and 222-275 (GSAM…RKQK). Composition is skewed to basic residues over residues 39–59 (KHAG…GGHK) and 254–275 (MGKK…RKQK).

This sequence belongs to the universal ribosomal protein uL2 family. As to quaternary structure, part of the 50S ribosomal subunit. Forms a bridge to the 30S subunit in the 70S ribosome.

Functionally, one of the primary rRNA binding proteins. Required for association of the 30S and 50S subunits to form the 70S ribosome, for tRNA binding and peptide bond formation. It has been suggested to have peptidyltransferase activity; this is somewhat controversial. Makes several contacts with the 16S rRNA in the 70S ribosome. In Herpetosiphon aurantiacus (strain ATCC 23779 / DSM 785 / 114-95), this protein is Large ribosomal subunit protein uL2.